The chain runs to 601 residues: ATP-dependent rRNA helicase SPB4 (601 aa).

The Q motif motif lies at 14-42 (LAWSQASLQPWIHDAIDSLGFRSMTPVQA). Residues 45–228 (IPLFCGNKDV…RTGMSNPVKI (184 aa)) enclose the Helicase ATP-binding domain. 58–65 (AVTGSGKT) is a binding site for ATP. A DEAD box motif is present at residues 176–179 (DEAD). The 163-residue stretch at 257 to 419 (VLINMLSTLQ…AYKAFSKNLR (163 aa)) folds into the Helicase C-terminal domain. Residues 507 to 575 (KEKIRLETME…QIMNESSDEE (69 aa)) are a coiled coil. The span at 532 to 554 (LKVKNEAWSSKNEKKEGKQERRE) shows a compositional bias: basic and acidic residues. The disordered stretch occupies residues 532–576 (LKVKNEAWSSKNEKKEGKQERREKMKRKREAIEKQIMNESSDEET).

This sequence belongs to the DEAD box helicase family. DDX55/SPB4 subfamily. In terms of assembly, component of pre-60S ribosomal complexes.

It is found in the nucleus. The protein resides in the nucleolus. It catalyses the reaction ATP + H2O = ADP + phosphate + H(+). Its function is as follows. ATP-binding RNA helicase involved in the biogenesis of 60S ribosomal subunits. Binds 90S pre-ribosomal particles and dissociates from pre-60S ribosomal particles after processing of 27SB pre-rRNA. Required for the normal formation of 18S rRNA through the processing of pre-rRNAs at sites A0, A1 and A2, and the normal formation of 25S and 5.8S rRNAs through the processing of pre-rRNAs at sites C1 and C2. This chain is ATP-dependent rRNA helicase SPB4, found in Meyerozyma guilliermondii (strain ATCC 6260 / CBS 566 / DSM 6381 / JCM 1539 / NBRC 10279 / NRRL Y-324) (Yeast).